Reading from the N-terminus, the 462-residue chain is Cysteine proteinase RD21A (462 aa).

An N-terminal signal peptide occupies residues 1–21; the sequence is MGFLKPTMAILFLAMVAVSSA. Positions 22-136 are cleaved as a propeptide — activation peptide; it reads VDMSIISYDE…LRYEARVGDE (115 aa). Asn90 carries N-linked (GlcNAc...) asparagine glycosylation. 5 cysteine pairs are disulfide-bonded: Cys158-Cys200, Cys192-Cys233, Cys291-Cys342, Cys375-Cys387, and Cys381-Cys402. Residue Cys161 is part of the active site. Catalysis depends on residues His297 and Asn317. A propeptide spans 353 to 462 (removed in mature form); it reads KNGENPPNPG…FWSQGRKNIA (110 aa). Asn414 is a glycosylation site (N-linked (GlcNAc...) asparagine).

This sequence belongs to the peptidase C1 family. In terms of assembly, interacts with SERPIN1. Interacts with PRN2. Interacts with WSCP. Interacts with TZF4, TZF5 and TZF6.

It is found in the vacuole. The protein localises to the golgi apparatus. It localises to the cytoplasm. The protein resides in the stress granule. Its subcellular location is the P-body. With respect to regulation, inhibited by the cysteine protease inhibitor E64 (L-trans-epoxysuccinyl-leucylamide-(4-guanido)-butane). Cysteine protease that plays a role in immunity, senescence, and biotic and abiotic stresses. Involved in immunity against the necrotrophic fungal pathogen Botrytis cinerea. Involved in elicitor-stimulated programmed cell death (PCD). During infection by the necrotrophic fungal pathogen Botrytis cinerea, functions as a PCD-promoting protease that is released from the ER body or vacuole to the cytoplasm. Accumulates in endoplasmic reticulum-derived bodies in epidermal cells and may participate in cell death in stressed or injured cells. Involved in water stress-induced cell death through its protease activity that is released to the cytoplasm after vacuolar collapse. Possesses protease activity in vitro and is involved in cell death in the transmitting tract and septum epidermis during flower development. Possesses peptide ligase activity. Can ligate peptides to unmodified N-termini of acceptor proteins. Probably ligates through a thioester intermediate. The polypeptide is Cysteine proteinase RD21A (Arabidopsis thaliana (Mouse-ear cress)).